A 297-amino-acid polypeptide reads, in one-letter code: UTP--glucose-1-phosphate uridylyltransferase YngB (297 aa).

The N-terminal stretch at 1–27 (MRKKVRKAVIPAAGLGTRFLPATKAQP) is a signal peptide.

The protein belongs to the UDPGP type 2 family. As to quaternary structure, homodimer.

It catalyses the reaction alpha-D-glucose 1-phosphate + UTP + H(+) = UDP-alpha-D-glucose + diphosphate. It functions in the pathway glycolipid metabolism; diglucosyl-diacylglycerol biosynthesis. Functionally, catalyzes the formation of UDP-glucose from glucose-1-phosphate and UTP. This is an intermediate step in the biosynthesis of diglucosyl-diacylglycerol (Glc2-DAG), i.e. the predominant glycolipid found in B.subtilis membrane, which is also used as a membrane anchor for lipoteichoic acid (LTA). YngB contributes to wall teichoic acid (WTA) glucosylation and glycolipid formation under anaerobic fermentative growth conditions. Might also enter other glycosylation pathways, leading to the decorating of other cell envelope components with glucose residues under anaerobic or other growth conditions. The polypeptide is UTP--glucose-1-phosphate uridylyltransferase YngB (yngB) (Bacillus subtilis (strain 168)).